The following is a 582-amino-acid chain: MLRTHTCGELRLQHIGISVTLCGWVQKIRNKGSLVWIDLRDRYGITQLILEEHITAPEILSQVQHIGREYVIQATGSVIERSAKNPSMPTGDIEIEVKSLTILNTAKTPPFLIEEQTDGGEELRMQYRYLDLRRPPLQKNLLLRQLVAQHARAYLEQHHFVDVETPLLIKSTPGGARDFVVPSRIHPQQFYALPQSPQIFKQLLMVAGLDRYYQIAKCFRDEDFRADRQPEFTQIDCELSFVTQADILHIFENFTKYIFEATIQVRLDKFPCITYAEAMQKYGTDKPDIRFGMRLIELTELVKNSEFPLFKQAKLIAGICVKGCADYTRKQLDDLTEYIKKLNLVTSGLVYVKYLADGSFNSPVSKFYDVEQLTLWAKQMHAVPGDLLLILAGEIEATQIALGSLRLKLRDELHLVSKDKFAPLWVVDFPLLEWNEESQRYVSRHHPFTSPKQEDIELLSTKPETVRANAYDLVINGMEIGGGSIRIHDRALQEQIFNVLGFSEEEARQQFGFLTDAFEYGAPPHGGIAFGFDRLCAIIGREDSIRPFIAFPKNNAGRDVMMKAPSTITEQQISELGIILSK.

Residues 198–201 (QIFK) are aspartate. L-aspartate is bound at residue arginine 220. Residues 220–222 (RDE) and glutamine 229 contribute to the ATP site. Histidine 445 serves as a coordination point for L-aspartate. ATP is bound at residue glutamate 479. Residue arginine 486 coordinates L-aspartate. 531–534 (GFDR) lines the ATP pocket.

This sequence belongs to the class-II aminoacyl-tRNA synthetase family. Type 1 subfamily. Homodimer.

The protein resides in the cytoplasm. The catalysed reaction is tRNA(Asp) + L-aspartate + ATP = L-aspartyl-tRNA(Asp) + AMP + diphosphate. Catalyzes the attachment of L-aspartate to tRNA(Asp) in a two-step reaction: L-aspartate is first activated by ATP to form Asp-AMP and then transferred to the acceptor end of tRNA(Asp). The protein is Aspartate--tRNA ligase of Amoebophilus asiaticus (strain 5a2).